The sequence spans 741 residues: NAD(P)H-quinone oxidoreductase subunit 5, chloroplastic (741 aa).

The next 16 helical transmembrane spans lie at 9–29 (WIIP…LLLF), 40–60 (WTFL…YLSI), 89–109 (IDPL…LVLI), 125–145 (FAYM…SNLI), 147–167 (VYFF…FWFT), 185–205 (GDFG…SFEF), 221–241 (VNLL…IAKS), 258–278 (TPIS…FLVA), 280–300 (LLPL…IGII), 327–347 (LGYM…FHLI), 354–374 (ALLF…VGYS), 396–416 (TAFL…CFWS), 425–445 (LLFS…TAFY), 547–567 (ILFP…IGIP), 602–622 (FLQN…IAYC), and 720–740 (ISSY…ILFY).

The protein belongs to the complex I subunit 5 family. As to quaternary structure, NDH is composed of at least 16 different subunits, 5 of which are encoded in the nucleus.

It localises to the plastid. The protein resides in the chloroplast thylakoid membrane. It catalyses the reaction a plastoquinone + NADH + (n+1) H(+)(in) = a plastoquinol + NAD(+) + n H(+)(out). The enzyme catalyses a plastoquinone + NADPH + (n+1) H(+)(in) = a plastoquinol + NADP(+) + n H(+)(out). Functionally, NDH shuttles electrons from NAD(P)H:plastoquinone, via FMN and iron-sulfur (Fe-S) centers, to quinones in the photosynthetic chain and possibly in a chloroplast respiratory chain. The immediate electron acceptor for the enzyme in this species is believed to be plastoquinone. Couples the redox reaction to proton translocation, and thus conserves the redox energy in a proton gradient. The protein is NAD(P)H-quinone oxidoreductase subunit 5, chloroplastic (ndhF) of Arabis hirsuta (Hairy rock-cress).